The chain runs to 977 residues: Kinesin-like protein KIN-7L, chloroplastic (977 aa).

A compositionally biased stretch (polar residues) spans 1–12 (MGSKQVSKTRNG). Positions 1–66 (MGSKQVSKTR…PPKPLQSKEN (66 aa)) are disordered. 2 stretches are compositionally biased toward low complexity: residues 22–31 (SSASSTTSSS) and 38–54 (SVDSHSSPTSSSVRSKP). In terms of domain architecture, Kinesin motor spans 66-385 (NVTVTVRFRP…LKFAHRAKHI (320 aa)). 146-153 (GVTSSGKT) contacts ATP. A coiled-coil region spans residues 386–471 (EIQAAQNKII…LTKLILVSNK (86 aa)). A disordered region spans residues 549-589 (DSSLGGSSLSDKSSAVKSNSTPSTPQGEGSDFHTESRLSEG). Over residues 551–561 (SLGGSSLSDKS) the composition is skewed to low complexity. The segment covering 563 to 575 (AVKSNSTPSTPQG) has biased composition (polar residues). 2 coiled-coil regions span residues 626–688 (MEIL…GKQI) and 732–942 (IQEQ…LENE). The segment covering 864–876 (SSVTTPQGKTGNL) has biased composition (polar residues). Disordered regions lie at residues 864-891 (SSVTTPQGKTGNLRNGRRESVSKRKEQE) and 958-977 (AANSGLSDSVSETRIEHFGT). Over residues 879-891 (GRRESVSKRKEQE) the composition is skewed to basic and acidic residues. Residues 958–967 (AANSGLSDSV) show a composition bias toward polar residues. Residues 968–977 (SETRIEHFGT) are compositionally biased toward basic and acidic residues.

The protein belongs to the TRAFAC class myosin-kinesin ATPase superfamily. Kinesin family. KIN-7 subfamily.

The protein localises to the plastid. It localises to the chloroplast. This Arabidopsis thaliana (Mouse-ear cress) protein is Kinesin-like protein KIN-7L, chloroplastic.